We begin with the raw amino-acid sequence, 185 residues long: Large ribosomal subunit protein uL5 (185 aa).

The protein belongs to the universal ribosomal protein uL5 family. In terms of assembly, part of the 50S ribosomal subunit; part of the 5S rRNA/L5/L18/L25 subcomplex. Contacts the 5S rRNA and the P site tRNA. Forms a bridge to the 30S subunit in the 70S ribosome.

This is one of the proteins that bind and probably mediate the attachment of the 5S RNA into the large ribosomal subunit, where it forms part of the central protuberance. In the 70S ribosome it contacts protein S13 of the 30S subunit (bridge B1b), connecting the 2 subunits; this bridge is implicated in subunit movement. Contacts the P site tRNA; the 5S rRNA and some of its associated proteins might help stabilize positioning of ribosome-bound tRNAs. This chain is Large ribosomal subunit protein uL5, found in Rhizobium leguminosarum bv. trifolii (strain WSM2304).